The chain runs to 4776 residues: Pneumococcal serine-rich repeat protein (4776 aa).

The N-terminal stretch at 1 to 72 (MTETVEDKVS…VVLGTISTSN (72 aa)) is a signal peptide. S73, S75, S76, S78, S80, S82, S94, S100, S108, S110, S118, S120, and S121 each carry an O-linked (GlcNAc...) serine glycan. The serine-rich repeat region 1, SRR1 stretch occupies residues 73 to 121 (SASSTSLSASESASTSASESASTSASTSASTSASESASTSASTSISASS). The disordered stretch occupies residues 86 to 112 (STSASESASTSASTSASTSASESASTS). Residues 122–166 (TVVGSQTAAATEATAKKVEEDRKKPASDYVASVTNVNLQSYAKRR) form a self aggregating domain region. The tract at residues 122–394 (TVVGSQTAAA…QSKSLSVSAS (273 aa)) is basic region, BR. Positions 164–168 (KRRKR) match the Host furin cleavage recognition motif. The keratin 10-binding domain, cell-type specific binding to lung-derived cells stretch occupies residues 273–341 (TQTMLTLGSD…GYGLTSSWTV (69 aa)). Residues 395-4712 (QSASASASTS…ASTSASASAS (4318 aa)) form a serine-rich repeat region 2, SRR2 region. Disordered stretches follow at residues 481–627 (ASTS…STSA), 861–889 (ASAS…SAST), 925–965 (ASAS…SASA), 1052–1085 (SAST…SASA), 1123–1153 (ASAS…STSA), 1171–1199 (ASAS…STSA), 1311–1357 (ASES…SAST), 1671–1731 (ASES…SESA), 1792–1863 (SASE…STSA), 2105–2133 (ASAS…SAST), 2169–2209 (ASAS…SASA), 2296–2329 (SAST…SASA), 2367–2397 (ASAS…STSA), 2415–2443 (ASAS…STSA), 2571–2631 (ASES…SESA), 2737–2805 (ESAS…STSA), 2855–3113 (ASAS…STSA), 3347–3375 (ASAS…SAST), 3411–3451 (ASAS…SASA), 3538–3571 (SAST…SASA), 3609–3639 (ASAS…STSA), 3657–3685 (ASAS…STSA), 3797–3843 (ASES…SAST), 4167–4197 (ASAS…STSA), 4215–4243 (ASAS…STSA), 4355–4401 (ASES…SAST), and 4706–4747 (SASA…GTES). Polar residues predominate over residues 4715–4747 (VSNSANHSNSQVGNTSGSTGKSQKELPNTGTES). The LPXTG sorting signal signature appears at 4740–4744 (LPNTG). Residue T4743 is modified to Pentaglycyl murein peptidoglycan amidated threonine. The propeptide at 4744–4776 (GTESSIGSVLLGVLAAVTGIGLVAKRRKRDEEE) is removed by sortase.

This sequence belongs to the serine-rich repeat protein (SRRP) family. In terms of assembly, binds to human and mouse protein keratin 10 (KRT10). In terms of processing, glycosylated. Only truncated substrates greater than 25 residues long are glycosylated by the Gtf1-Gtf2 complex in vitro; only Ser residues have been seen to be glycosylated. Based on electrophoretic mobility it is probable that most of the Ser residues in SSR1 and SSR2 are O-GlcNAcylated. Subsequent glycosylation by up to 7 sugar transferases (Gtf3 and GlyAT, GlyB, GlyD, GlyE, GlyF and GlyG) is able to generate very high sugar polymorphism. Post-translationally, can be cleaved by human furin protease; this fragment contributes to self-aggregation and possibly biofilm formation in vitro.

Its subcellular location is the secreted. The protein localises to the cell wall. The protein resides in the cell surface. Functionally, protein that allows bacteria to adhere to mammalian host cells. Required for full virulence in mouse infection models when infected intranasally. Required for adhesion to host cells in vitro and for persistence in the lower respiratory tract. Binds host keratin 10 (KRT10) on lung cells which mediates adhesion via the C-terminus of the basic region (BR, residues 273-341); glycosylation of either protein is not required for the interaction. A region in the N-terminus (residues 122-166) self aggregates, contributing to mature biofilm formation. The basic region (BR, residues 187-385) also self aggregates; the BR binds DNA which enhances self aggregation. The chain is Pneumococcal serine-rich repeat protein from Streptococcus pneumoniae serotype 4 (strain ATCC BAA-334 / TIGR4).